The following is a 308-amino-acid chain: Ferredoxin--NADP reductase (308 aa).

Residues glutamate 26, glutamine 34, tyrosine 39, valine 77, phenylalanine 106, aspartate 266, and threonine 306 each coordinate FAD.

This sequence belongs to the ferredoxin--NADP reductase type 2 family. In terms of assembly, homodimer. It depends on FAD as a cofactor.

The catalysed reaction is 2 reduced [2Fe-2S]-[ferredoxin] + NADP(+) + H(+) = 2 oxidized [2Fe-2S]-[ferredoxin] + NADPH. The sequence is that of Ferredoxin--NADP reductase from Lactobacillus delbrueckii subsp. bulgaricus (strain ATCC 11842 / DSM 20081 / BCRC 10696 / JCM 1002 / NBRC 13953 / NCIMB 11778 / NCTC 12712 / WDCM 00102 / Lb 14).